A 159-amino-acid chain; its full sequence is Phosphopantetheine adenylyltransferase (159 aa).

Threonine 10 provides a ligand contact to substrate. ATP is bound by residues threonine 10–phenylalanine 11 and histidine 18. Substrate-binding residues include lysine 42, leucine 74, and arginine 88. Residues glycine 89–arginine 91, glutamate 99, and phenylalanine 124–serine 130 each bind ATP.

Belongs to the bacterial CoaD family. Homohexamer. Requires Mg(2+) as cofactor.

Its subcellular location is the cytoplasm. It carries out the reaction (R)-4'-phosphopantetheine + ATP + H(+) = 3'-dephospho-CoA + diphosphate. It participates in cofactor biosynthesis; coenzyme A biosynthesis; CoA from (R)-pantothenate: step 4/5. Reversibly transfers an adenylyl group from ATP to 4'-phosphopantetheine, yielding dephospho-CoA (dPCoA) and pyrophosphate. In Thioalkalivibrio sulfidiphilus (strain HL-EbGR7), this protein is Phosphopantetheine adenylyltransferase.